A 189-amino-acid chain; its full sequence is MTEYKLVVVGAGGVGKSALTIQLIQNHFVDEYDPTIEDSYRKQVVIDGETCLLDILDTAGQEEYSAMRDQYMRTGEGFLLVFAVNSAKSFEDIGTYREQIKRVKDAEEVPMVLVGNKCDLPSWNVQNEQAREVAKQYGIPYIETSAKTRMGVDDAFYTLVREIRKDKDNKGRKGRKLNKPNRRFKCKML.

Residue 10–17 coordinates GTP; that stretch reads GAGGVGKS. The Effector region signature appears at 32–40; the sequence is YDPTIEDSY. GTP is bound by residues 57 to 61 and 116 to 119; these read DTAGQ and NKCD. A Cysteine methyl ester modification is found at cysteine 186. Residue cysteine 186 is the site of S-geranylgeranyl cysteine attachment. A propeptide spans 187–189 (removed in mature form); that stretch reads KML.

It belongs to the small GTPase superfamily. Ras family.

It is found in the cell membrane. The enzyme catalyses GTP + H2O = GDP + phosphate + H(+). With respect to regulation, alternates between an inactive form bound to GDP and an active form bound to GTP. Activated by a guanine nucleotide-exchange factor (GEF) and inactivated by a GTPase-activating protein (GAP). Ras proteins bind GDP/GTP and possess intrinsic GTPase activity. Plays a role in eye development by regulating cell growth, survival of postmitotic ommatidial cells and differentiation of photoreceptor cells. During larval development, mediates Ptth/tor signaling leading to the production of ecdysone, a hormone required for the initiation of metamorphosis. This Drosophila willistoni (Fruit fly) protein is Ras-like protein 1.